The sequence spans 217 residues: uncharacterized protein (217 aa).

This sequence belongs to the IIV-6 309L family.

This is an uncharacterized protein from Acheta domesticus (House cricket).